A 436-amino-acid polypeptide reads, in one-letter code: Acetylcholine receptor non-alpha chain (436 aa).

Residues 1 to 195 (IIDVHEIDQI…IFYLELRRKP (195 aa)) are Extracellular-facing. An N-linked (GlcNAc...) asparagine glycan is attached at asparagine 62. Cysteine 89 and cysteine 103 form a disulfide bridge. Asparagine 140 carries N-linked (GlcNAc...) asparagine glycosylation. Transmembrane regions (helical) follow at residues 196 to 219 (LFYTVNLVFPCVGISFLTIVAFYL), 227 to 245 (VTLCILILVALTVFYLLLK), and 261 to 280 (YLLFTMIMVSLSVLVTVISL). The Cytoplasmic segment spans residues 281–404 (NLHFRRPSTH…WKFVARVLDR (124 aa)). A helical transmembrane segment spans residues 405–423 (LFLLLFSIACFLGTILILF).

The protein belongs to the ligand-gated ion channel (TC 1.A.9) family. Acetylcholine receptor (TC 1.A.9.1) subfamily.

It localises to the postsynaptic cell membrane. The protein localises to the cell membrane. After binding acetylcholine, the AChR responds by an extensive change in conformation that affects all subunits and leads to opening of an ion-conducting channel across the plasma membrane. The protein is Acetylcholine receptor non-alpha chain of Onchocerca volvulus.